A 577-amino-acid polypeptide reads, in one-letter code: Myb-like protein N (577 aa).

Disordered stretches follow at residues 1–23 (MMTI…NIYT), 206–225 (TPFS…SPLN), and 240–264 (SSSS…LSSS). A compositionally biased stretch (low complexity) spans 213 to 225 (PNSPNSTSSSPLN). HTH myb-type domains are found at residues 403–465 (KKST…CPAI) and 466–517 (RKGS…SREV). DNA-binding regions (H-T-H motif) lie at residues 437 to 461 (WKKI…KRVL) and 489 to 513 (WKNV…KSCM). The Myb-like domain maps to 518–570 (PWTPKEDEILQKKVIENKQDSTKEIGWMDLSKAMARARQTKIPRTALECKIRF).

Its subcellular location is the nucleus. This chain is Myb-like protein N (mybN), found in Dictyostelium discoideum (Social amoeba).